An 861-amino-acid chain; its full sequence is MTVIDTSDLEKHTPMMRQYLGLKAAHPDMLLFYRMGDFYELFYDDAKRASEMLGISLTARGKSGGDPIPMAGIPYHAVEGYLAKLVNIGQSVAICEQIGDPATSKGPVERQVVRIVTPGTLTDEALLQEKQDNLLAALYQGKTGFGYATLDISSGRFVVAELPTREALEAELQRTNPAELLYSEDFTDMLLINNMKGIRRRPEWEFDYDTCINLLLNQFGTKDLHGFGITDARLALQAAGCLMQYVKDTQKMALPHINSIVRFNQSESIILDAATRRNLELTQNLSGGRENTLAWVLDNTATPMGSRMLQRWIHEPLRNRQTIQYRHSAVSELIEQDLYQTLHEQLKSLGDIERIMARLALRSARPRDFSRLKQALTLLPEIQQTLAICQQPRLNTLVQLLGEFPEQHDLLERAIVDNPPMLIRDGGVIRTGYNNELDEWRKLSEGASDYLVELEAREKQQTGINTLKVGYNRVHGYYIEVSRLQSDRVPLSYQRRQTLKGTERYITPELKEYEEKVLSSQGKALALEKQLWEQLFDLLLPKLQELQQFATAAAELDILSNFAERAELFNYQCPQMSHDIGINIEAGRHPVVERVSQAAFIANPVALTPQRQMLIVTGPNMGGKSTYMRQVALITLMAHIGCFVPADHAQIGEIDRIFTRIGASDDLASGRSTFMVEMTETANILHNATANSLVLMDEIGRGTSTYDGLALAWSAAEYLAKNVSALTLFATHYFELTQLPELLPSVINVHLDAIEHDDTIAFMHSVQEGAASKSYGLQVAALAGVPASVIKAAKHKLHQLENRDMTLSQQNPTQVSMNLLPPIPEPSLALEKLAQINPDELTPKQALDYLYELKRLSHTNT.

618–625 (GPNMGGKS) provides a ligand contact to ATP.

It belongs to the DNA mismatch repair MutS family.

This protein is involved in the repair of mismatches in DNA. It is possible that it carries out the mismatch recognition step. This protein has a weak ATPase activity. In Shewanella frigidimarina (strain NCIMB 400), this protein is DNA mismatch repair protein MutS.